The primary structure comprises 483 residues: Cyclic AMP-dependent transcription factor ATF-7 (483 aa).

Positions M1–M285 are transactivation domain. The C2H2-type zinc finger occupies F7 to H31. A Phosphothreonine; by MAPK11 modification is found at T51. Phosphothreonine occurs at positions 53 and 101. A Glycyl lysine isopeptide (Lys-Gly) (interchain with G-Cter in SUMO1) cross-link involves residue K107. 2 disordered regions span residues E110–P148 and H299–A345. Composition is skewed to low complexity over residues V114 to P126 and Q307 to G320. Residues T326 to R343 are compositionally biased toward basic and acidic residues. Positions D332 to H395 constitute a bZIP domain. The interval R334 to K354 is basic motif. The segment at L360–L388 is leucine-zipper. Disordered stretches follow at residues T407–L440 and L464–R483. A phosphoserine mark is found at S413 and S423. Over residues Q429–L440 the composition is skewed to polar residues.

It belongs to the bZIP family. Homodimer; binds DNA as homodimer. Heterodimer; heterodimerizes with other members of ATF family and with JUN family members. Interacts with JNK2; the interaction does not phosphorylate ATF7 but acts as a docking site for other ATF-associated partners such as JUN family members. Interacts (via its transactivation domain) with TAF12 (isoforms TAFII15 and TAFII20); the interaction potentiates the transactivation activity (isoform TAFII20 only) and is inhibited by ATF7 sumoylation. Interacts with TAF4; the interaction inhibits the TAF12-dependent transactivation. Interacts with MAPK9; the interaction does not phosphorylate ATF7 but acts as a docking site for ATF7-associated partners such as JUN. Interacts with Ku complex components XRCC6 and XRCC7. Interacts with TERT. On EGF stimulation, phosphorylated first on Thr-53 allowing subsequent phosphorylation on Thr-51. This latter phosphorylation prevents sumoylation, increases binding to TAF12 and enhances transcriptional activity. Social isolation stress as well as TNF-alpha also induce the phosphorylation of ATF7. Phosphorylated in proliferating colonic and small intestinal epithelial cells. In terms of processing, sumoylation delays nuclear localization and inhibits transactivation activity through preventing binding to TAF12. RANBP2 appears to be the specific E3 ligase.

It localises to the nucleus. Its subcellular location is the nucleoplasm. The protein localises to the chromosome. The protein resides in the telomere. In terms of biological role, stress-responsive chromatin regulator that plays a role in various biological processes including innate immunological memory, adipocyte differentiation or telomerase regulation. In absence of stress, contributes to the formation of heterochromatin and heterochromatin-like structure by recruiting histone H3K9 tri- and di-methyltransferases thus silencing the transcription of target genes such as STAT1 in adipocytes, or genes involved in innate immunity in macrophages and adipocytes. Stress induces ATF7 phosphorylation that disrupts interactions with histone methyltransferase and enhances the association with coactivators containing histone acetyltransferase and/or histone demethylase, leading to disruption of the heterochromatin-like structure and subsequently transcriptional activation. In response to TNF-alpha, which is induced by various stresses, phosphorylated ATF7 and telomerase are released from telomeres leading to telomere shortening. Plays also a role in maintaining epithelial regenerative capacity and protecting against cell death during intestinal epithelial damage and repair. This is Cyclic AMP-dependent transcription factor ATF-7 (ATF7) from Pongo abelii (Sumatran orangutan).